Here is a 93-residue protein sequence, read N- to C-terminus: UPF0298 protein LMHCC_0506 (93 aa).

This sequence belongs to the UPF0298 family.

Its subcellular location is the cytoplasm. This chain is UPF0298 protein LMHCC_0506, found in Listeria monocytogenes serotype 4a (strain HCC23).